The following is a 353-amino-acid chain: Photosystem II D2 protein (353 aa).

An N-acetylthreonine modification is found at T2. T2 carries the phosphothreonine modification. A helical membrane pass occupies residues 41-61 (CAYFALGGWFTGTTFVTSWYT). H118 serves as a coordination point for chlorophyll a. Residues 125-141 (GFMLRQFELARSVQLRP) traverse the membrane as a helical segment. Pheophytin a-binding residues include Q130 and N143. A helical membrane pass occupies residues 153–166 (VFVSVFLIYPLGQS). H198 is a binding site for chlorophyll a. A helical membrane pass occupies residues 208-228 (AALLCAIHGATVENTLFEDGD). H215 and F262 together coordinate a plastoquinone. A Fe cation-binding site is contributed by H215. Residue H269 coordinates Fe cation. Residues 279 to 295 (GLWMSAIGVVGLALNLR) form a helical membrane-spanning segment.

The protein belongs to the reaction center PufL/M/PsbA/D family. PSII is composed of 1 copy each of membrane proteins PsbA, PsbB, PsbC, PsbD, PsbE, PsbF, PsbH, PsbI, PsbJ, PsbK, PsbL, PsbM, PsbT, PsbX, PsbY, PsbZ, Psb30/Ycf12, at least 3 peripheral proteins of the oxygen-evolving complex and a large number of cofactors. It forms dimeric complexes. The D1/D2 heterodimer binds P680, chlorophylls that are the primary electron donor of PSII, and subsequent electron acceptors. It shares a non-heme iron and each subunit binds pheophytin, quinone, additional chlorophylls, carotenoids and lipids. There is also a Cl(-1) ion associated with D1 and D2, which is required for oxygen evolution. The PSII complex binds additional chlorophylls, carotenoids and specific lipids. is required as a cofactor.

The protein localises to the plastid. The protein resides in the chloroplast thylakoid membrane. It carries out the reaction 2 a plastoquinone + 4 hnu + 2 H2O = 2 a plastoquinol + O2. Photosystem II (PSII) is a light-driven water:plastoquinone oxidoreductase that uses light energy to abstract electrons from H(2)O, generating O(2) and a proton gradient subsequently used for ATP formation. It consists of a core antenna complex that captures photons, and an electron transfer chain that converts photonic excitation into a charge separation. The D1/D2 (PsbA/PsbD) reaction center heterodimer binds P680, the primary electron donor of PSII as well as several subsequent electron acceptors. D2 is needed for assembly of a stable PSII complex. This chain is Photosystem II D2 protein, found in Saccharum hybrid (Sugarcane).